Here is a 158-residue protein sequence, read N- to C-terminus: Egg cell-secreted protein 1.1 (158 aa).

Positions 1–27 (MASKSSFMATFNIVTLMLMVASSTVTA) are cleaved as a signal peptide. A glycan (N-linked (GlcNAc...) asparagine) is linked at Asn-122.

Belongs to the plant egg cell-secreted peptide family. Restricted to female reproductive tissues, specifically accumulating in storage vesicles of the unfertilized egg cell.

It is found in the cytoplasmic vesicle. The protein resides in the secreted. Functionally, involved in the regulation of gamete interactions during the double fertilization and to prevent multiple-pollen tube attraction; mediates the redistribution of the gamete fusogen HAP2/GCS1 to the cell surface after secretion upon sperm arrival. The sequence is that of Egg cell-secreted protein 1.1 (EC1.1) from Arabidopsis thaliana (Mouse-ear cress).